The primary structure comprises 422 residues: 4-hydroxy-3-methylbut-2-en-1-yl diphosphate synthase (flavodoxin) (422 aa).

[4Fe-4S] cluster-binding residues include Cys316, Cys319, Cys362, and Glu369.

It belongs to the IspG family. [4Fe-4S] cluster serves as cofactor.

The enzyme catalyses (2E)-4-hydroxy-3-methylbut-2-enyl diphosphate + oxidized [flavodoxin] + H2O + 2 H(+) = 2-C-methyl-D-erythritol 2,4-cyclic diphosphate + reduced [flavodoxin]. The protein operates within isoprenoid biosynthesis; isopentenyl diphosphate biosynthesis via DXP pathway; isopentenyl diphosphate from 1-deoxy-D-xylulose 5-phosphate: step 5/6. In terms of biological role, converts 2C-methyl-D-erythritol 2,4-cyclodiphosphate (ME-2,4cPP) into 1-hydroxy-2-methyl-2-(E)-butenyl 4-diphosphate. This is 4-hydroxy-3-methylbut-2-en-1-yl diphosphate synthase (flavodoxin) from Anaplasma marginale (strain St. Maries).